Consider the following 505-residue polypeptide: Lysine--tRNA ligase (505 aa).

2 residues coordinate Mg(2+): glutamate 403 and glutamate 410.

It belongs to the class-II aminoacyl-tRNA synthetase family. As to quaternary structure, homodimer. It depends on Mg(2+) as a cofactor.

Its subcellular location is the cytoplasm. The enzyme catalyses tRNA(Lys) + L-lysine + ATP = L-lysyl-tRNA(Lys) + AMP + diphosphate. This is Lysine--tRNA ligase from Methanospirillum hungatei JF-1 (strain ATCC 27890 / DSM 864 / NBRC 100397 / JF-1).